A 110-amino-acid chain; its full sequence is Iron-sulfur cluster assembly protein CyaY (110 aa).

This sequence belongs to the frataxin family.

Functionally, involved in iron-sulfur (Fe-S) cluster assembly. May act as a regulator of Fe-S biogenesis. The polypeptide is Iron-sulfur cluster assembly protein CyaY (Pseudomonas fluorescens (strain Pf0-1)).